The sequence spans 351 residues: c-di-GMP synthase (351 aa).

The protein belongs to the CD-NTase family. E05 subfamily.

The enzyme catalyses 2 GTP = 3',3'-c-di-GMP + 2 diphosphate. Functionally, cyclic nucleotide synthase (second messenger synthase) of a CBASS antivirus system. CBASS (cyclic oligonucleotide-based antiphage signaling system) provides immunity against bacteriophage. The CD-NTase protein synthesizes cyclic nucleotides in response to infection; these serve as specific second messenger signals. The signals activate a diverse range of effectors, leading to bacterial cell death and thus abortive phage infection. A type I-D(GG) CBASS system. Cyclic dinucleotide synthase that catalyzes the synthesis of c-di-GMP, has no activity with other NTP substrates. The protein is c-di-GMP synthase (cdnE) of Capnocytophaga granulosa (strain ATCC 51502 / DSM 11449 / JCM 8566 / LMG 16022 / NCTC 12948 / B0611).